A 218-amino-acid chain; its full sequence is Keratin-associated protein 10-8 (218 aa).

The tract at residues 26–202 is 16 X 5 AA repeats of C-C-X(3); that stretch reads CGNQVSSPSA…FCQPSCCHPA (177 aa). Repeat copies occupy residues 50-54, 55-59, 60-64, 86-90, 96-100, 101-105, 111-115, 121-125, 131-135, 136-140, 141-145, 151-155, 161-167, 168-172, 187-191, and 198-202.

The protein belongs to the KRTAP type 10 family. As to quaternary structure, interacts with hair keratins.

In the hair cortex, hair keratin intermediate filaments are embedded in an interfilamentous matrix, consisting of hair keratin-associated proteins (KRTAP), which are essential for the formation of a rigid and resistant hair shaft through their extensive disulfide bond cross-linking with abundant cysteine residues of hair keratins. The matrix proteins include the high-sulfur and high-glycine-tyrosine keratins. The protein is Keratin-associated protein 10-8 of Bos taurus (Bovine).